A 385-amino-acid polypeptide reads, in one-letter code: 8-amino-7-oxononanoate synthase (385 aa).

Substrate is bound at residue Arg21. Residue Gly108–Phe109 participates in pyridoxal 5'-phosphate binding. His133 is a binding site for substrate. 3 residues coordinate pyridoxal 5'-phosphate: Ser179, His207, and Thr233. Lys236 carries the post-translational modification N6-(pyridoxal phosphate)lysine. Substrate is bound at residue Thr352.

The protein belongs to the class-II pyridoxal-phosphate-dependent aminotransferase family. BioF subfamily. Homodimer. Pyridoxal 5'-phosphate serves as cofactor.

It catalyses the reaction 6-carboxyhexanoyl-[ACP] + L-alanine + H(+) = (8S)-8-amino-7-oxononanoate + holo-[ACP] + CO2. Its pathway is cofactor biosynthesis; biotin biosynthesis. Functionally, catalyzes the decarboxylative condensation of pimeloyl-[acyl-carrier protein] and L-alanine to produce 8-amino-7-oxononanoate (AON), [acyl-carrier protein], and carbon dioxide. The sequence is that of 8-amino-7-oxononanoate synthase from Salmonella paratyphi A (strain ATCC 9150 / SARB42).